A 440-amino-acid polypeptide reads, in one-letter code: tRNA-2-methylthio-N(6)-dimethylallyladenosine synthase (440 aa).

The region spanning 5–121 is the MTTase N-terminal domain; that stretch reads KKLYIKTYGC…LPEMEAKAGT (117 aa). [4Fe-4S] cluster contacts are provided by cysteine 14, cysteine 50, cysteine 84, cysteine 159, cysteine 163, and cysteine 166. In terms of domain architecture, Radical SAM core spans 145-378; it reads AKRGPTAFLT…LTRQQREVQD (234 aa). Residues 378–440 form the TRAM domain; that stretch reads DSMVGRELGV…ANSLAGELID (63 aa).

The protein belongs to the methylthiotransferase family. MiaB subfamily. As to quaternary structure, monomer. [4Fe-4S] cluster is required as a cofactor.

The protein resides in the cytoplasm. It carries out the reaction N(6)-dimethylallyladenosine(37) in tRNA + (sulfur carrier)-SH + AH2 + 2 S-adenosyl-L-methionine = 2-methylsulfanyl-N(6)-dimethylallyladenosine(37) in tRNA + (sulfur carrier)-H + 5'-deoxyadenosine + L-methionine + A + S-adenosyl-L-homocysteine + 2 H(+). Functionally, catalyzes the methylthiolation of N6-(dimethylallyl)adenosine (i(6)A), leading to the formation of 2-methylthio-N6-(dimethylallyl)adenosine (ms(2)i(6)A) at position 37 in tRNAs that read codons beginning with uridine. This Ruegeria sp. (strain TM1040) (Silicibacter sp.) protein is tRNA-2-methylthio-N(6)-dimethylallyladenosine synthase.